A 286-amino-acid polypeptide reads, in one-letter code: Dioxygenase trt7 (286 aa).

Residues histidine 129, aspartate 131, and histidine 206 each coordinate Fe cation.

Belongs to the PhyH family. As to quaternary structure, homodimer. The cofactor is Fe cation.

The protein operates within secondary metabolite biosynthesis; terpenoid biosynthesis. In terms of biological role, dioxygenase; part of the gene cluster that mediates the biosynthesis of terretonin, a fungal meroterpenoid that acts as a mycotoxin. The first step of the pathway is the synthesis of 3,5-dimethylorsellinic acid (DMOA) by the polyketide synthase trt4. DMOA is then prenylated into farnesyl-DMOA by the polyprenyl transferase trt2. Methylation by the methyltransferase trt5 then leads to farnesyl-DMOA methyl ester which is further subject to epoxidation by the FAD-dependent monooxygenase trt8 to yield epoxyfarnesyl-DMOA methyl ester. Cyclization of epoxyfarnesyl-DMOA methyl ester by the terpene cyclase trt1 leads to a tetracycle intermediate which is in turn converted to preterretonin. Dehydrogenase trt9 comes next to transform preterretonin to preterrenoid. The FAD-dependent monooxygenase trt3 is then required for the C-hydroxylation at C16 of preterrenoid to yield terrenoid. The cytochrome P450 trt6 catalyzes three successive oxidations to transform terrenoid into an unstable intermediate, which then undergoes the D-ring expansion and unusual rearrangement of the methoxy group to afford the core skeleton of terretonin. Trt14 catalyzes the D-ring expansion of terretonin involving intramolecular methoxy rearrangement as well as the hydrolysis of the expanded D-ring and the methyl ester moiety. Finally, the nonheme iron-dependent dioxygenase trt7 accomplishes the last two oxidation reactions steps to complete the biosynthesis of terretonin. Terretonin C is produced via spontaneous decarboxylation of the terretonin precursor. Another shunt product of the terretonin biosynthesis is dihydrofarnesyl-DMOA, derived from epoxyfarnesyl-DMOA through hydrolysis of the epoxide. The protein is Dioxygenase trt7 of Aspergillus terreus (strain NIH 2624 / FGSC A1156).